The following is a 1538-amino-acid chain: Dicer-like protein 1 (1538 aa).

Residues 39-72 (DPAESSADVHKDEHSSDNSDNDNEAVPKPNDFSQ) are disordered. Basic and acidic residues predominate over residues 45 to 55 (ADVHKDEHSSD). Positions 134–315 (LFERAKTQNT…EAATRLETLL (182 aa)) constitute a Helicase ATP-binding domain. 147–154 (LDTGSGKT) contributes to the ATP binding site. Residues 260–263 (DEAH) carry the DEAH box motif. Positions 460-619 (ELSKHFSDTT…ETLPEDRILH (160 aa)) constitute a Helicase C-terminal domain. The Dicer dsRNA-binding fold domain occupies 652–742 (AIAILARYAS…NSIYHRRLPA (91 aa)). A PAZ domain is found at 892-1020 (DTVSFVHNND…ICAEPLRISA (129 aa)). 2 consecutive RNase III domains span residues 1044-1203 (IALE…LSGG) and 1254-1406 (ARHV…VDSK). 3 residues coordinate Mg(2+): glutamate 1295, aspartate 1392, and glutamate 1395. In terms of domain architecture, DRBM spans 1440–1508 (TFLHNKLTNE…SEKALAVLDG (69 aa)). The Zn(2+) site is built by cysteine 1452, histidine 1479, cysteine 1520, and cysteine 1522.

Belongs to the helicase family. Dicer subfamily. The cofactor is Mg(2+). Mn(2+) is required as a cofactor.

Its function is as follows. Dicer-like endonuclease involved in cleaving double-stranded RNA in the RNA interference (RNAi) pathway. Produces 21 to 25 bp dsRNAs (siRNAs) which target the selective destruction of homologous RNAs leading to sequence-specific suppression of gene expression, called post-transcriptional gene silencing (PTGS). Part of a broad host defense response against viral infection and transposons. In Neosartorya fischeri (strain ATCC 1020 / DSM 3700 / CBS 544.65 / FGSC A1164 / JCM 1740 / NRRL 181 / WB 181) (Aspergillus fischerianus), this protein is Dicer-like protein 1 (dcl1).